A 305-amino-acid chain; its full sequence is Aspartate carbamoyltransferase catalytic subunit (305 aa).

Residues Arg60 and Thr61 each contribute to the carbamoyl phosphate site. Residue Lys88 participates in L-aspartate binding. Carbamoyl phosphate is bound by residues Arg110, His138, and Gln141. Arg171 and Arg222 together coordinate L-aspartate. Residues Ala263 and Pro264 each coordinate carbamoyl phosphate.

Belongs to the aspartate/ornithine carbamoyltransferase superfamily. ATCase family. Heterododecamer (2C3:3R2) of six catalytic PyrB chains organized as two trimers (C3), and six regulatory PyrI chains organized as three dimers (R2).

The enzyme catalyses carbamoyl phosphate + L-aspartate = N-carbamoyl-L-aspartate + phosphate + H(+). It participates in pyrimidine metabolism; UMP biosynthesis via de novo pathway; (S)-dihydroorotate from bicarbonate: step 2/3. In terms of biological role, catalyzes the condensation of carbamoyl phosphate and aspartate to form carbamoyl aspartate and inorganic phosphate, the committed step in the de novo pyrimidine nucleotide biosynthesis pathway. This is Aspartate carbamoyltransferase catalytic subunit from Halalkalibacterium halodurans (strain ATCC BAA-125 / DSM 18197 / FERM 7344 / JCM 9153 / C-125) (Bacillus halodurans).